The primary structure comprises 329 residues: RNA polymerase sigma factor SigB (329 aa).

The segment covering 1–12 (MTSPSDVEASTE) has biased composition (polar residues). The segment at 1–27 (MTSPSDVEASTETVDRGSRRNQTNDNP) is disordered. Positions 120-133 (DLIQEGNLGLIRAM) match the Polymerase core binding motif. The H-T-H motif DNA-binding region spans 290–309 (LDQIGRQFGLSRERVRQIER).

It belongs to the sigma-70 factor family.

Its function is as follows. Sigma factors are initiation factors that promote the attachment of RNA polymerase to specific initiation sites and are then released. The chain is RNA polymerase sigma factor SigB (sigB) from Corynebacterium diphtheriae (strain ATCC 700971 / NCTC 13129 / Biotype gravis).